The chain runs to 359 residues: SAGA complex subunit Spt7 (359 aa).

In terms of assembly, component of the Spt-Ada-Gcn5 acetyltransferase (SAGA) complex consisting of wda/Taf5L, Saf6, Taf9, Taf10b, Taf12, Ada1, Spt3, Spt7, Spt20, Sf3b3, Sf3b5, Nipped-A/Tra1, a histone acetyltransferase (HAT) module made up of Gcn5, Ada2b (Isoform B), Ada3 and Sgf29, and a deubiquitinase (DUB) module made up of not/nonstop, Sgf11 and e(y)2 tethered to SAGA by Atxn7. Interacts with Ada2b; the interaction is direct.

It localises to the nucleus. Its function is as follows. Component of the transcription regulatory complex SAGA, a multiprotein complex that activates transcription by remodeling chromatin and mediating histone acetylation and deubiquitination. The SAGA complex predominantly acetylates histone H3. This chain is SAGA complex subunit Spt7, found in Drosophila melanogaster (Fruit fly).